The following is a 156-amino-acid chain: Small ribosomal subunit protein uS7 (156 aa).

The protein belongs to the universal ribosomal protein uS7 family. In terms of assembly, part of the 30S ribosomal subunit. Contacts proteins S9 and S11.

Its function is as follows. One of the primary rRNA binding proteins, it binds directly to 16S rRNA where it nucleates assembly of the head domain of the 30S subunit. Is located at the subunit interface close to the decoding center, probably blocks exit of the E-site tRNA. This is Small ribosomal subunit protein uS7 (rpsG) from Geobacillus stearothermophilus (Bacillus stearothermophilus).